The primary structure comprises 382 residues: Galactokinase (382 aa).

A substrate-binding site is contributed by 34–37 (EHTD). An ATP-binding site is contributed by 124–130 (GAGLSSS). Residues serine 130 and glutamate 162 each contribute to the Mg(2+) site. The Proton acceptor role is filled by aspartate 174. Substrate is bound at residue tyrosine 223.

Belongs to the GHMP kinase family. GalK subfamily.

It is found in the cytoplasm. It carries out the reaction alpha-D-galactose + ATP = alpha-D-galactose 1-phosphate + ADP + H(+). Its pathway is carbohydrate metabolism; galactose metabolism. Its function is as follows. Catalyzes the transfer of the gamma-phosphate of ATP to D-galactose to form alpha-D-galactose-1-phosphate (Gal-1-P). This Salmonella schwarzengrund (strain CVM19633) protein is Galactokinase.